A 245-amino-acid polypeptide reads, in one-letter code: Biosynthetic peptidoglycan transglycosylase (245 aa).

The chain crosses the membrane as a helical span at residues 20–42 (VYAGSVFAGAWLATQLFYLAQIA).

It belongs to the glycosyltransferase 51 family.

Its subcellular location is the cell inner membrane. It carries out the reaction [GlcNAc-(1-&gt;4)-Mur2Ac(oyl-L-Ala-gamma-D-Glu-L-Lys-D-Ala-D-Ala)](n)-di-trans,octa-cis-undecaprenyl diphosphate + beta-D-GlcNAc-(1-&gt;4)-Mur2Ac(oyl-L-Ala-gamma-D-Glu-L-Lys-D-Ala-D-Ala)-di-trans,octa-cis-undecaprenyl diphosphate = [GlcNAc-(1-&gt;4)-Mur2Ac(oyl-L-Ala-gamma-D-Glu-L-Lys-D-Ala-D-Ala)](n+1)-di-trans,octa-cis-undecaprenyl diphosphate + di-trans,octa-cis-undecaprenyl diphosphate + H(+). Its pathway is cell wall biogenesis; peptidoglycan biosynthesis. Functionally, peptidoglycan polymerase that catalyzes glycan chain elongation from lipid-linked precursors. In Burkholderia orbicola (strain MC0-3), this protein is Biosynthetic peptidoglycan transglycosylase.